Reading from the N-terminus, the 303-residue chain is Glycine--tRNA ligase alpha subunit (303 aa).

The protein belongs to the class-II aminoacyl-tRNA synthetase family. Tetramer of two alpha and two beta subunits.

The protein resides in the cytoplasm. The catalysed reaction is tRNA(Gly) + glycine + ATP = glycyl-tRNA(Gly) + AMP + diphosphate. In Stenotrophomonas maltophilia (strain R551-3), this protein is Glycine--tRNA ligase alpha subunit.